A 184-amino-acid chain; its full sequence is dCTP deaminase (184 aa).

Lys107 to Arg112 lines the dCTP pocket. The Proton donor/acceptor role is filled by Glu133. Positions 152, 166, and 176 each coordinate dCTP.

Belongs to the dCTP deaminase family. Homotrimer.

The catalysed reaction is dCTP + H2O + H(+) = dUTP + NH4(+). The protein operates within pyrimidine metabolism; dUMP biosynthesis; dUMP from dCTP (dUTP route): step 1/2. Functionally, catalyzes the deamination of dCTP to dUTP. The chain is dCTP deaminase from Granulibacter bethesdensis (strain ATCC BAA-1260 / CGDNIH1).